The following is a 236-amino-acid chain: Baculoviral IAP repeat-containing protein 8 (236 aa).

A BIR repeat occupies 7–70 (WLITFGTWMY…KWYPGCKYLL (64 aa)). The Zn(2+) site is built by Cys39, Cys42, His59, and Cys66. The segment at 189-224 (CKICMDRHIAVVFIPCGHLVTCKQCAEAVDRCPMCN) adopts an RING-type zinc-finger fold.

Belongs to the IAP family. In terms of assembly, binds to caspase-9.

The protein resides in the cytoplasm. Protects against apoptosis mediated by BAX. The protein is Baculoviral IAP repeat-containing protein 8 (BIRC8) of Gorilla gorilla gorilla (Western lowland gorilla).